A 623-amino-acid polypeptide reads, in one-letter code: 1-deoxy-D-xylulose-5-phosphate synthase (623 aa).

Residues histidine 80 and 121 to 123 (GHS) contribute to the thiamine diphosphate site. Aspartate 152 is a binding site for Mg(2+). Thiamine diphosphate-binding positions include 153–154 (GA), asparagine 181, tyrosine 289, and glutamate 372. Position 181 (asparagine 181) interacts with Mg(2+).

The protein belongs to the transketolase family. DXPS subfamily. As to quaternary structure, homodimer. The cofactor is Mg(2+). Requires thiamine diphosphate as cofactor.

It carries out the reaction D-glyceraldehyde 3-phosphate + pyruvate + H(+) = 1-deoxy-D-xylulose 5-phosphate + CO2. It functions in the pathway metabolic intermediate biosynthesis; 1-deoxy-D-xylulose 5-phosphate biosynthesis; 1-deoxy-D-xylulose 5-phosphate from D-glyceraldehyde 3-phosphate and pyruvate: step 1/1. Catalyzes the acyloin condensation reaction between C atoms 2 and 3 of pyruvate and glyceraldehyde 3-phosphate to yield 1-deoxy-D-xylulose-5-phosphate (DXP). In Baumannia cicadellinicola subsp. Homalodisca coagulata, this protein is 1-deoxy-D-xylulose-5-phosphate synthase.